The chain runs to 372 residues: Queuine tRNA-ribosyltransferase (372 aa).

Aspartate 92 acts as the Proton acceptor in catalysis. Substrate-binding positions include 92–96 (DSGGY), aspartate 146, glutamine 188, and glycine 215. The RNA binding stretch occupies residues 246-252 (GIGSLRE). Aspartate 265 serves as the catalytic Nucleophile. The RNA binding; important for wobble base 34 recognition stretch occupies residues 270–274 (TRLGR). The Zn(2+) site is built by cysteine 303, cysteine 305, cysteine 308, and histidine 334.

This sequence belongs to the queuine tRNA-ribosyltransferase family. In terms of assembly, homodimer. Within each dimer, one monomer is responsible for RNA recognition and catalysis, while the other monomer binds to the replacement base PreQ1. It depends on Zn(2+) as a cofactor.

The enzyme catalyses 7-aminomethyl-7-carbaguanine + guanosine(34) in tRNA = 7-aminomethyl-7-carbaguanosine(34) in tRNA + guanine. Its pathway is tRNA modification; tRNA-queuosine biosynthesis. Its function is as follows. Catalyzes the base-exchange of a guanine (G) residue with the queuine precursor 7-aminomethyl-7-deazaguanine (PreQ1) at position 34 (anticodon wobble position) in tRNAs with GU(N) anticodons (tRNA-Asp, -Asn, -His and -Tyr). Catalysis occurs through a double-displacement mechanism. The nucleophile active site attacks the C1' of nucleotide 34 to detach the guanine base from the RNA, forming a covalent enzyme-RNA intermediate. The proton acceptor active site deprotonates the incoming PreQ1, allowing a nucleophilic attack on the C1' of the ribose to form the product. After dissociation, two additional enzymatic reactions on the tRNA convert PreQ1 to queuine (Q), resulting in the hypermodified nucleoside queuosine (7-(((4,5-cis-dihydroxy-2-cyclopenten-1-yl)amino)methyl)-7-deazaguanosine). The chain is Queuine tRNA-ribosyltransferase from Prochlorococcus marinus (strain MIT 9215).